A 626-amino-acid chain; its full sequence is MRMLLIHSDYLEYEVKDKALKNPEPISDEQKTGRLDEVLAVFISVEKVDETNPDEVVEKAVKEIEDVASQIKAERIFVYPFAHLSSELAKPDVALEVLRKIEEKLREKGYEVKRAPFGYYKAFKLSCKGHPLAELSRTIVPEKAVSKEERNIALEKEEKELKSYWYILTPEGELIDVDKFDFTGHENLKKFVNYEIAKNRVADREPPHVRLMLEQELVDYEPGSDAGNLRYYPKGRLIKSLLEQYVTEKVIEYGAMEVETPIMYDFEHPALEKYLNRFPARQYVVKSGDKKFFLRFAACFGQFLIKKDATISYRNLPLRMYELTRYSFRREKSGELSGLRRLRAFTMPDMHTVARDLKQAMDEFKKQYKLSMEVLKGVGLTPEDYEVAIRFTRDFWEQNRDFIVELAKIIGKPVLIEMWDQRFFYFILKFEFNFVDNLDKAAALSTVQIDVENAERFGIKYYDEEGKERTPLILHCSPSGAIERVMYAILEKQAKLQEKGIKPMYPLWLSPIQVRVIPVSDEVMDYALYVAGKLEGAKIRVDVDDTGDRLNKKIRKAEKEWIPYIIVVGRNEKEQNTVTVRRRSDGRQVEMQLEDLIREIKGQTEGFPYKPRPLPLLLSRRPKFRG.

The tract at residues 1–145 (MRMLLIHSDY…SRTIVPEKAV (145 aa)) is editing domain. Residues 207–506 (PHVRLMLEQE…QEKGIKPMYP (300 aa)) are catalytic. Positions 299, 351, and 475 each coordinate Zn(2+).

The protein belongs to the class-II aminoacyl-tRNA synthetase family. Homodimer. Zn(2+) is required as a cofactor.

The protein resides in the cytoplasm. It catalyses the reaction tRNA(Thr) + L-threonine + ATP = L-threonyl-tRNA(Thr) + AMP + diphosphate + H(+). In terms of biological role, catalyzes the attachment of threonine to tRNA(Thr) in a two-step reaction: L-threonine is first activated by ATP to form Thr-AMP and then transferred to the acceptor end of tRNA(Thr). Also edits incorrectly charged L-seryl-tRNA(Thr). The sequence is that of Threonine--tRNA ligase from Thermococcus kodakarensis (strain ATCC BAA-918 / JCM 12380 / KOD1) (Pyrococcus kodakaraensis (strain KOD1)).